Here is a 143-residue protein sequence, read N- to C-terminus: Small ribosomal subunit protein eS6 (143 aa).

This sequence belongs to the eukaryotic ribosomal protein eS6 family.

This is Small ribosomal subunit protein eS6 from Methanoregula boonei (strain DSM 21154 / JCM 14090 / 6A8).